The chain runs to 430 residues: S-adenosylmethionine synthase (430 aa).

His14 serves as a coordination point for ATP. Mg(2+) is bound at residue Asp16. Glu42 is a K(+) binding site. L-methionine contacts are provided by Glu55 and Gln98. Residues 98–108 (QSPDINRGVER) form a flexible loop region. Residues 164–166 (DAK), 254–255 (KF), Asp263, 269–270 (RK), Ala286, and Lys290 contribute to the ATP site. Asp263 contacts L-methionine. Residue Lys294 coordinates L-methionine.

This sequence belongs to the AdoMet synthase family. In terms of assembly, homotetramer; dimer of dimers. Mg(2+) serves as cofactor. The cofactor is K(+).

It is found in the cytoplasm. The enzyme catalyses L-methionine + ATP + H2O = S-adenosyl-L-methionine + phosphate + diphosphate. It functions in the pathway amino-acid biosynthesis; S-adenosyl-L-methionine biosynthesis; S-adenosyl-L-methionine from L-methionine: step 1/1. In terms of biological role, catalyzes the formation of S-adenosylmethionine (AdoMet) from methionine and ATP. The overall synthetic reaction is composed of two sequential steps, AdoMet formation and the subsequent tripolyphosphate hydrolysis which occurs prior to release of AdoMet from the enzyme. The sequence is that of S-adenosylmethionine synthase from Bacteroides thetaiotaomicron (strain ATCC 29148 / DSM 2079 / JCM 5827 / CCUG 10774 / NCTC 10582 / VPI-5482 / E50).